The sequence spans 162 residues: Small ribosomal subunit protein uS9 (162 aa).

It belongs to the universal ribosomal protein uS9 family.

In Parvibaculum lavamentivorans (strain DS-1 / DSM 13023 / NCIMB 13966), this protein is Small ribosomal subunit protein uS9.